A 150-amino-acid polypeptide reads, in one-letter code: Cytochrome c oxidase subunit 5A, mitochondrial (150 aa).

A mitochondrion-targeting transit peptide spans 1-41 (MLGTALRRCAVAAASRAGPRGLQHPAPVPGPTAAIQSIRCY). An SIFI-degron motif is present at residues 2–17 (LGTALRRCAVAAASRA). Residues Lys87 and Lys113 each carry the N6-acetyllysine modification. Position 141 is a phosphothreonine (Thr141).

The protein belongs to the cytochrome c oxidase subunit 5A family. Component of the cytochrome c oxidase (complex IV, CIV), a multisubunit enzyme composed of 14 subunits. The complex is composed of a catalytic core of 3 subunits MT-CO1, MT-CO2 and MT-CO3, encoded in the mitochondrial DNA, and 11 supernumerary subunits COX4I, COX5A, COX5B, COX6A, COX6B, COX6C, COX7A, COX7B, COX7C, COX8 and NDUFA4, which are encoded in the nuclear genome. The complex exists as a monomer or a dimer and forms supercomplexes (SCs) in the inner mitochondrial membrane with NADH-ubiquinone oxidoreductase (complex I, CI) and ubiquinol-cytochrome c oxidoreductase (cytochrome b-c1 complex, complex III, CIII), resulting in different assemblies (supercomplex SCI(1)III(2)IV(1) and megacomplex MCI(2)III(2)IV(2)). Interacts with AFG1L. Interacts with RAB5IF. In response to mitochondrial stress, the precursor protein is ubiquitinated by the SIFI complex in the cytoplasm before mitochondrial import, leading to its degradation. Within the SIFI complex, UBR4 initiates ubiquitin chain that are further elongated or branched by KCMF1.

The protein localises to the mitochondrion inner membrane. It functions in the pathway energy metabolism; oxidative phosphorylation. Functionally, component of the cytochrome c oxidase, the last enzyme in the mitochondrial electron transport chain which drives oxidative phosphorylation. The respiratory chain contains 3 multisubunit complexes succinate dehydrogenase (complex II, CII), ubiquinol-cytochrome c oxidoreductase (cytochrome b-c1 complex, complex III, CIII) and cytochrome c oxidase (complex IV, CIV), that cooperate to transfer electrons derived from NADH and succinate to molecular oxygen, creating an electrochemical gradient over the inner membrane that drives transmembrane transport and the ATP synthase. Cytochrome c oxidase is the component of the respiratory chain that catalyzes the reduction of oxygen to water. Electrons originating from reduced cytochrome c in the intermembrane space (IMS) are transferred via the dinuclear copper A center (CU(A)) of subunit 2 and heme A of subunit 1 to the active site in subunit 1, a binuclear center (BNC) formed by heme A3 and copper B (CU(B)). The BNC reduces molecular oxygen to 2 water molecules using 4 electrons from cytochrome c in the IMS and 4 protons from the mitochondrial matrix. The chain is Cytochrome c oxidase subunit 5A, mitochondrial (COX5A) from Nycticebus coucang (Slow loris).